Consider the following 378-residue polypeptide: Dual-specificity RNA methyltransferase RlmN (378 aa).

Glu95 (proton acceptor) is an active-site residue. In terms of domain architecture, Radical SAM core spans 101–345 (EETRGTLCVS…TTIRKTRGDD (245 aa)). Cys108 and Cys350 form a disulfide bridge. Positions 115, 119, and 122 each coordinate [4Fe-4S] cluster. S-adenosyl-L-methionine contacts are provided by residues 176-177 (GE), Ser208, 230-232 (SLH), and Asn307. The active-site S-methylcysteine intermediate is Cys350.

This sequence belongs to the radical SAM superfamily. RlmN family. It depends on [4Fe-4S] cluster as a cofactor.

It is found in the cytoplasm. It carries out the reaction adenosine(2503) in 23S rRNA + 2 reduced [2Fe-2S]-[ferredoxin] + 2 S-adenosyl-L-methionine = 2-methyladenosine(2503) in 23S rRNA + 5'-deoxyadenosine + L-methionine + 2 oxidized [2Fe-2S]-[ferredoxin] + S-adenosyl-L-homocysteine. The catalysed reaction is adenosine(37) in tRNA + 2 reduced [2Fe-2S]-[ferredoxin] + 2 S-adenosyl-L-methionine = 2-methyladenosine(37) in tRNA + 5'-deoxyadenosine + L-methionine + 2 oxidized [2Fe-2S]-[ferredoxin] + S-adenosyl-L-homocysteine. Functionally, specifically methylates position 2 of adenine 2503 in 23S rRNA and position 2 of adenine 37 in tRNAs. m2A2503 modification seems to play a crucial role in the proofreading step occurring at the peptidyl transferase center and thus would serve to optimize ribosomal fidelity. This Burkholderia thailandensis (strain ATCC 700388 / DSM 13276 / CCUG 48851 / CIP 106301 / E264) protein is Dual-specificity RNA methyltransferase RlmN.